The chain runs to 252 residues: Triosephosphate isomerase (252 aa).

10 to 12 (NWK) is a binding site for substrate. The active-site Electrophile is the His96. Glu168 functions as the Proton acceptor in the catalytic mechanism. Substrate is bound by residues Gly174, Ser214, and 235–236 (GG).

It belongs to the triosephosphate isomerase family. As to quaternary structure, homodimer.

The protein localises to the cytoplasm. It catalyses the reaction D-glyceraldehyde 3-phosphate = dihydroxyacetone phosphate. Its pathway is carbohydrate biosynthesis; gluconeogenesis. It functions in the pathway carbohydrate degradation; glycolysis; D-glyceraldehyde 3-phosphate from glycerone phosphate: step 1/1. In terms of biological role, involved in the gluconeogenesis. Catalyzes stereospecifically the conversion of dihydroxyacetone phosphate (DHAP) to D-glyceraldehyde-3-phosphate (G3P). In Lactobacillus delbrueckii subsp. bulgaricus (strain ATCC 11842 / DSM 20081 / BCRC 10696 / JCM 1002 / NBRC 13953 / NCIMB 11778 / NCTC 12712 / WDCM 00102 / Lb 14), this protein is Triosephosphate isomerase.